Consider the following 194-residue polypeptide: Putative manganese efflux pump MntP (194 aa).

6 helical membrane passes run 3–23 (PITT…AAIG), 37–57 (LYVA…GWLL), 65–85 (IATF…IHMI), 112–132 (LAAT…SMAF), 137–157 (IGIV…FGVM), and 170–190 (AEIV…YEHL).

The protein belongs to the MntP (TC 9.B.29) family.

The protein resides in the cell inner membrane. Functionally, probably functions as a manganese efflux pump. The protein is Putative manganese efflux pump MntP of Xylella fastidiosa (strain M23).